The following is a 607-amino-acid chain: WD repeat-containing protein 1 (607 aa).

13 WD repeats span residues 4 to 45 (ELKK…IRNI), 48 to 87 (PAIA…IWDT), 93 to 135 (LLKY…LWDT), 138 to 176 (SVGE…FFEG), 180 to 218 (KFKF…LYDG), 224 to 263 (VGNL…IWDV), 270 to 306 (TTFH…YLDK), 311 to 351 (RPLR…YWDA), 358 to 408 (TFTG…KMDV), 432 to 474 (LKDK…LYSI), 480 to 518 (KDEG…VFNV), 523 to 561 (SEQN…VWTL), and 566 to 604 (ARIK…QWTV).

Belongs to the WD repeat AIP1 family.

It is found in the cell membrane. The protein resides in the cytoplasm. It localises to the cytoskeleton. Its subcellular location is the nucleus. In terms of biological role, induces disassembly of actin filaments in conjunction with ADF/cofilin family proteins. Doesn't sever actin filaments alone, but caps the barbed ends of filaments severed by cofilin, which blocks annealing and depolymerization and allows more extensive severing by cofilin. This Xenopus tropicalis (Western clawed frog) protein is WD repeat-containing protein 1.